A 543-amino-acid chain; its full sequence is MKKEFLMFLFALLIIPIIGIFIIWSTQFYSKMYQYPFYYMPYPFKKVVITEGANSCMLKDGSWSQVVLTDSDDMFIQNETAPKVVAFIISILNLMVSLLVYILFDFSNNQFQFIQEHYDLSFYDIYLGVDGISIYFVLLTTIIIPIALMSNWNSITNNVKSYLIIMLLLETLLLAVFLVLDILLFYIFFESILPPLFILIGLFGSSNKVRASFYIFLYTLLGSLFLLLSILTMSSIMGTTYFDALLKSNFDYTIQIFLFCGIFIAFAVKTPTIFLNNWLLKAHVESPLGGSIVLAGIVLKLSLYGIFRLILPLLPKASLNYTYIIFVIGVITIIYASFSTLRTTDIKELIAYSSVSHAAVYLIGVFSNTIQGIEGGILLGLAHGFTSPALFFIVGGVLYDRSGTRLIHYYKGIAQMAPLLSLLFFIFSLANCGVPLTLNFVGEFMSLYGVFERLPLLGLLASSSIVFSAAYSIFLFNRVAFGGSFSKFFENSIIDLTKREFYALIFLGVLVVFLGIYPSIILDGLHYNVSSLIYSYGCKFCLG.

A run of 14 helical transmembrane segments spans residues 5–25 (FLMFLFALLIIPIIGIFIIWS), 84–104 (VVAFIISILNLMVSLLVYILF), 129–149 (VDGISIYFVLLTTIIIPIALM), 161–181 (SYLIIMLLLETLLLAVFLVLD), 182–202 (ILLFYIFFESILPPLFILIGL), 213–233 (FYIFLYTLLGSLFLLLSILTM), 254–274 (IQIFLFCGIFIAFAVKTPTIF), 287–307 (PLGGSIVLAGIVLKLSLYGIF), 321–341 (YTYIIFVIGVITIIYASFSTL), 350–370 (IAYSSVSHAAVYLIGVFSNTI), 377–397 (ILLGLAHGFTSPALFFIVGGV), 416–436 (MAPLLSLLFFIFSLANCGVPL), 456–476 (LLGLLASSSIVFSAAYSIFLF), and 501–521 (FYALIFLGVLVVFLGIYPSII).

Belongs to the complex I subunit 4 family.

It is found in the mitochondrion membrane. The enzyme catalyses a ubiquinone + NADH + 5 H(+)(in) = a ubiquinol + NAD(+) + 4 H(+)(out). Functionally, core subunit of the mitochondrial membrane respiratory chain NADH dehydrogenase (Complex I) that is believed to belong to the minimal assembly required for catalysis. Complex I functions in the transfer of electrons from NADH to the respiratory chain. The immediate electron acceptor for the enzyme is believed to be ubiquinone. In Neurospora crassa (strain ATCC 24698 / 74-OR23-1A / CBS 708.71 / DSM 1257 / FGSC 987), this protein is NADH-ubiquinone oxidoreductase chain 4 (ndh-4).